We begin with the raw amino-acid sequence, 433 residues long: uncharacterized protein (433 aa).

An N-terminal signal peptide occupies residues 1–26; it reads MTRRAEFEMGLFVILQSMFLISLCSS. 8 N-linked (GlcNAc...) asparagine glycosylation sites follow: Asn59, Asn72, Asn125, Asn159, Asn210, Asn275, Asn282, and Asn323. The GPI-anchor amidated alanine moiety is linked to residue Ala405. Residues 406 to 433 constitute a propeptide, removed in mature form; it reads SSQPRLHDEGVTRLVIFVLSMLLVMLLS.

The protein resides in the cell membrane. This is an uncharacterized protein from Arabidopsis thaliana (Mouse-ear cress).